The sequence spans 479 residues: Ribosomal RNA small subunit methyltransferase F (479 aa).

Residues 125–131, glutamate 149, aspartate 176, and aspartate 194 each bind S-adenosyl-L-methionine; that span reads AAAPGSK. Catalysis depends on cysteine 247, which acts as the Nucleophile.

This sequence belongs to the class I-like SAM-binding methyltransferase superfamily. RsmB/NOP family.

The protein resides in the cytoplasm. The catalysed reaction is cytidine(1407) in 16S rRNA + S-adenosyl-L-methionine = 5-methylcytidine(1407) in 16S rRNA + S-adenosyl-L-homocysteine + H(+). Its function is as follows. Specifically methylates the cytosine at position 1407 (m5C1407) of 16S rRNA. The polypeptide is Ribosomal RNA small subunit methyltransferase F (Salmonella newport (strain SL254)).